Here is a 334-residue protein sequence, read N- to C-terminus: Glycerol-3-phosphate dehydrogenase [NAD(P)+] (334 aa).

Residues Ser-14, Tyr-15, His-35, and Lys-109 each contribute to the NADPH site. Residues Lys-109, Gly-138, and Thr-140 each contribute to the sn-glycerol 3-phosphate site. Ala-142 lines the NADPH pocket. Residues Lys-194, Asp-247, Ser-257, Arg-258, and Asn-259 each contribute to the sn-glycerol 3-phosphate site. Lys-194 acts as the Proton acceptor in catalysis. Arg-258 is an NADPH binding site. NADPH contacts are provided by Val-282 and Glu-284.

Belongs to the NAD-dependent glycerol-3-phosphate dehydrogenase family.

The protein resides in the cytoplasm. It catalyses the reaction sn-glycerol 3-phosphate + NAD(+) = dihydroxyacetone phosphate + NADH + H(+). The enzyme catalyses sn-glycerol 3-phosphate + NADP(+) = dihydroxyacetone phosphate + NADPH + H(+). Its pathway is membrane lipid metabolism; glycerophospholipid metabolism. Its function is as follows. Catalyzes the reduction of the glycolytic intermediate dihydroxyacetone phosphate (DHAP) to sn-glycerol 3-phosphate (G3P), the key precursor for phospholipid synthesis. The chain is Glycerol-3-phosphate dehydrogenase [NAD(P)+] from Aeromonas salmonicida (strain A449).